The sequence spans 760 residues: uncharacterized protein (760 aa).

The N-terminal stretch at 1–23 (MVIKKGFFALSSCTLGLGLILTA) is a signal peptide. Cys-24 carries the N-palmitoyl cysteine lipid modification. The S-diacylglycerol cysteine moiety is linked to residue Cys-24. 2 disordered regions span residues 220–262 (ANGK…NSDN) and 443–482 (YEIK…NQTS). 2 stretches are compositionally biased toward polar residues: residues 222–257 (GKTT…SQDA) and 448–472 (PTNS…GKEQ).

The protein belongs to the MG185/MG260 family.

Its subcellular location is the cell membrane. This is an uncharacterized protein from Mycoplasma pneumoniae (strain ATCC 29342 / M129 / Subtype 1) (Mycoplasmoides pneumoniae).